Consider the following 458-residue polypeptide: Exodeoxyribonuclease 7 large subunit (458 aa).

It belongs to the XseA family. Heterooligomer composed of large and small subunits.

It localises to the cytoplasm. It catalyses the reaction Exonucleolytic cleavage in either 5'- to 3'- or 3'- to 5'-direction to yield nucleoside 5'-phosphates.. Bidirectionally degrades single-stranded DNA into large acid-insoluble oligonucleotides, which are then degraded further into small acid-soluble oligonucleotides. The sequence is that of Exodeoxyribonuclease 7 large subunit from Escherichia coli O6:H1 (strain CFT073 / ATCC 700928 / UPEC).